Reading from the N-terminus, the 647-residue chain is Chaperone protein DnaK (647 aa).

Thr198 bears the Phosphothreonine; by autocatalysis mark. Basic and acidic residues-rich tracts occupy residues 514–529 (AEAN…ESVD), 540–557 (STEK…DADK), and 600–622 (SQEK…KDDN). 2 disordered regions span residues 514–557 (AEAN…DADK) and 596–647 (AIYK…EKSA). The span at 623–632 (VVDADFEEVK) shows a compositional bias: acidic residues. Positions 633 to 647 (EESKEGKEEDKEKSA) are enriched in basic and acidic residues.

This sequence belongs to the heat shock protein 70 family.

In terms of biological role, acts as a chaperone. The protein is Chaperone protein DnaK of Pelagibacter ubique (strain HTCC1062).